The primary structure comprises 404 residues: Agnestins biosynthesis cluster transcription factor AgnL10 (404 aa).

A DNA-binding region (zn(2)-C6 fungal-type) is located at residues 23 to 50 (CNRCAVSKIKCSKEKPACARCAKQDKVC). Disordered stretches follow at residues 54–83 (ATKRAGRKRGSRRHNNPVPSPTTQDLPTAA), 188–209 (ASASSMDPAAGPQRPPDEPSSG), and 294–318 (PGPDGDGVSWDNSTPPPGEQGAGVD). Over residues 57 to 68 (RAGRKRGSRRHN) the composition is skewed to basic residues. Positions 74–83 (PTTQDLPTAA) are enriched in polar residues. Positions 188–197 (ASASSMDPAA) are enriched in low complexity.

It localises to the nucleus. Functionally, transcription factor that regulates the expression of the gene cluster that mediates the biosynthesis of agnestins, dihydroxy-xanthone metabolites. This Paecilomyces divaricatus (Penicillium divaricatum) protein is Agnestins biosynthesis cluster transcription factor AgnL10.